A 517-amino-acid polypeptide reads, in one-letter code: tRNA-2-methylthio-N(6)-dimethylallyladenosine synthase (517 aa).

Residues 18–137 enclose the MTTase N-terminal domain; sequence RTYQVRTYGC…LPTLLDRARH (120 aa). [4Fe-4S] cluster contacts are provided by C27, C66, C100, C174, C178, and C181. The region spanning 160–397 is the Radical SAM core domain; it reads RESDYAAWVS…ELQEQICMEE (238 aa). One can recognise a TRAM domain in the interval 399 to 470; the sequence is RVLIGRIVEL…PHHLIADAGI (72 aa).

The protein belongs to the methylthiotransferase family. MiaB subfamily. As to quaternary structure, monomer. The cofactor is [4Fe-4S] cluster.

It localises to the cytoplasm. It carries out the reaction N(6)-dimethylallyladenosine(37) in tRNA + (sulfur carrier)-SH + AH2 + 2 S-adenosyl-L-methionine = 2-methylsulfanyl-N(6)-dimethylallyladenosine(37) in tRNA + (sulfur carrier)-H + 5'-deoxyadenosine + L-methionine + A + S-adenosyl-L-homocysteine + 2 H(+). Its function is as follows. Catalyzes the methylthiolation of N6-(dimethylallyl)adenosine (i(6)A), leading to the formation of 2-methylthio-N6-(dimethylallyl)adenosine (ms(2)i(6)A) at position 37 in tRNAs that read codons beginning with uridine. This is tRNA-2-methylthio-N(6)-dimethylallyladenosine synthase from Mycobacterium leprae (strain TN).